Here is a 360-residue protein sequence, read N- to C-terminus: tRNA pseudouridine synthase D (360 aa).

The active-site Nucleophile is D76. In terms of domain architecture, TRUD spans 151–332 (GMPNFFGYQR…HGIYKEKNAW (182 aa)).

Belongs to the pseudouridine synthase TruD family.

It carries out the reaction uridine(13) in tRNA = pseudouridine(13) in tRNA. Functionally, responsible for synthesis of pseudouridine from uracil-13 in transfer RNAs. This is tRNA pseudouridine synthase D from Nitratiruptor sp. (strain SB155-2).